The primary structure comprises 83 residues: Apolipoprotein C-I (83 aa).

An N-terminal signal peptide occupies residues 1 to 26 (MRLILSLPVLAVVLAMVLEGPAPAQA).

Belongs to the apolipoprotein C1 family.

It is found in the secreted. Its function is as follows. Inhibitor of lipoprotein binding to the low density lipoprotein (LDL) receptor, LDL receptor-related protein, and very low density lipoprotein (VLDL) receptor. Associates with high density lipoproteins (HDL) and the triacylglycerol-rich lipoproteins in the plasma and makes up about 10% of the protein of the VLDL and 2% of that of HDL. Appears to interfere directly with fatty acid uptake and is also the major plasma inhibitor of cholesteryl ester transfer protein (CETP). Binds free fatty acids and reduces their intracellular esterification. Modulates the interaction of APOE with beta-migrating VLDL and inhibits binding of beta-VLDL to the LDL receptor-related protein. The chain is Apolipoprotein C-I (APOC1) from Eonycteris spelaea (Lesser dawn bat).